The primary structure comprises 312 residues: Malate dehydrogenase (312 aa).

NAD(+) contacts are provided by residues 12-17 (GAGFTG) and D36. Substrate-binding residues include R87 and R93. Residues N100 and 123–125 (LTN) each bind NAD(+). N125 is a binding site for substrate. Position 149 is a phosphoserine (S149). R156 contributes to the substrate binding site. H180 functions as the Proton acceptor in the catalytic mechanism.

Belongs to the LDH/MDH superfamily. MDH type 3 family. Homotetramer.

The enzyme catalyses (S)-malate + NAD(+) = oxaloacetate + NADH + H(+). Functionally, catalyzes the reversible oxidation of malate to oxaloacetate. The sequence is that of Malate dehydrogenase from Bacillus israeli.